A 320-amino-acid chain; its full sequence is Probable L,D-transpeptidase YcfS (320 aa).

The signal sequence occupies residues 1–23; it reads MMIKTRFSRWLTFFTFAAAVALA. One can recognise a LysM domain in the interval 45–90; the sequence is KFHVVENDGGSLEAIAKKYNVGFLALLQANPGVDPYVPRAGSVLTI. The L,D-TPase catalytic domain occupies 102 to 241; the sequence is EGIVINIAEL…VTPGTKVNII (140 aa). The Proton donor/acceptor role is filled by His201. Cys217 functions as the Nucleophile in the catalytic mechanism.

It belongs to the YkuD family. Interacts with DsbG.

Its subcellular location is the periplasm. Its pathway is cell wall biogenesis; peptidoglycan biosynthesis. Functionally, responsible, at least in part, for anchoring of the major outer membrane lipoprotein (Lpp, also known as the Braun lipoprotein) to the peptidoglycan via a meso-diaminopimelyl-L-Lys- bond on the terminal residue of Lpp. The polypeptide is Probable L,D-transpeptidase YcfS (ycfS) (Escherichia coli (strain K12)).